The following is a 172-amino-acid chain: Ribosome maturation factor RimM (172 aa).

Residues 96-168 form the PRC barrel domain; that stretch reads EGEFYYHEII…RVDVEIPEGL (73 aa).

It belongs to the RimM family. Binds ribosomal protein uS19.

Its subcellular location is the cytoplasm. An accessory protein needed during the final step in the assembly of 30S ribosomal subunit, possibly for assembly of the head region. Essential for efficient processing of 16S rRNA. May be needed both before and after RbfA during the maturation of 16S rRNA. It has affinity for free ribosomal 30S subunits but not for 70S ribosomes. In Streptococcus gordonii (strain Challis / ATCC 35105 / BCRC 15272 / CH1 / DL1 / V288), this protein is Ribosome maturation factor RimM.